A 259-amino-acid chain; its full sequence is uncharacterized protein (259 aa).

The signal sequence occupies residues Met1–Gly22. The N-palmitoyl cysteine moiety is linked to residue Cys23. Cys23 carries S-diacylglycerol cysteine lipidation.

It belongs to the staphylococcal tandem lipoprotein family.

Its subcellular location is the cell membrane. This is an uncharacterized protein from Staphylococcus epidermidis (strain ATCC 35984 / DSM 28319 / BCRC 17069 / CCUG 31568 / BM 3577 / RP62A).